The primary structure comprises 210 residues: MAFILSFWMIFLLDSVIVLLSFVCFVCVWICALLFSTVLLVSKLNNIYCTWDFTASKFIDVYWFTIGGMFSLGLLLRLCLLLYFGHLNFVSFDLCKVVGFQWYWVYFIFGETTIFSNLILESDYMIGDLRLLQCNHVLTLLSLVIYKLWLSAVDVIHSFAISSLGVKVDCIPGRCNEIVLFSSNNATVYGQCSELCGVLHGFMPIVICFI.

Residues 1–20 (MAFILSFWMIFLLDSVIVLL) lie on the Mitochondrial intermembrane side of the membrane. A helical membrane pass occupies residues 21-42 (SFVCFVCVWICALLFSTVLLVS). The Mitochondrial matrix portion of the chain corresponds to 43 to 60 (KLNNIYCTWDFTASKFID). Residues 61–86 (VYWFTIGGMFSLGLLLRLCLLLYFGH) traverse the membrane as a helical segment. Residues 87-210 (LNFVSFDLCK…GFMPIVICFI (124 aa)) are Mitochondrial intermembrane-facing. 6 residues coordinate Cu cation: His-157, Cys-192, Glu-194, Cys-196, His-200, and Met-203. Glu-194 lines the Mg(2+) pocket.

This sequence belongs to the cytochrome c oxidase subunit 2 family. In terms of assembly, component of the cytochrome c oxidase (complex IV, CIV), a multisubunit enzyme composed of a catalytic core of 3 subunits and several supernumerary subunits. The complex exists as a monomer or a dimer and forms supercomplexes (SCs) in the inner mitochondrial membrane with ubiquinol-cytochrome c oxidoreductase (cytochrome b-c1 complex, complex III, CIII). Cu cation serves as cofactor.

It is found in the mitochondrion inner membrane. It catalyses the reaction 4 Fe(II)-[cytochrome c] + O2 + 8 H(+)(in) = 4 Fe(III)-[cytochrome c] + 2 H2O + 4 H(+)(out). Functionally, component of the cytochrome c oxidase, the last enzyme in the mitochondrial electron transport chain which drives oxidative phosphorylation. The respiratory chain contains 3 multisubunit complexes succinate dehydrogenase (complex II, CII), ubiquinol-cytochrome c oxidoreductase (cytochrome b-c1 complex, complex III, CIII) and cytochrome c oxidase (complex IV, CIV), that cooperate to transfer electrons derived from NADH and succinate to molecular oxygen, creating an electrochemical gradient over the inner membrane that drives transmembrane transport and the ATP synthase. Cytochrome c oxidase is the component of the respiratory chain that catalyzes the reduction of oxygen to water. Electrons originating from reduced cytochrome c in the intermembrane space (IMS) are transferred via the dinuclear copper A center (CU(A)) of subunit 2 and heme A of subunit 1 to the active site in subunit 1, a binuclear center (BNC) formed by heme A3 and copper B (CU(B)). The BNC reduces molecular oxygen to 2 water molecules using 4 electrons from cytochrome c in the IMS and 4 protons from the mitochondrial matrix. The sequence is that of Cytochrome c oxidase subunit 2 from Leishmania tarentolae (Sauroleishmania tarentolae).